The following is a 363-amino-acid chain: 4-hydroxy-2-oxovalerate aldolase 1 (363 aa).

Residues 13-265 (VRMTDTSLRD…KTGIDFFDIA (253 aa)) form the Pyruvate carboxyltransferase domain. 21-22 (RD) provides a ligand contact to substrate. Mn(2+) is bound at residue Asp-22. Catalysis depends on His-25, which acts as the Proton acceptor. Positions 175 and 204 each coordinate substrate. The Mn(2+) site is built by His-204 and His-206. Residue Tyr-295 coordinates substrate.

It belongs to the 4-hydroxy-2-oxovalerate aldolase family.

It catalyses the reaction (S)-4-hydroxy-2-oxopentanoate = acetaldehyde + pyruvate. This Mycobacterium sp. (strain JLS) protein is 4-hydroxy-2-oxovalerate aldolase 1.